Here is a 687-residue protein sequence, read N- to C-terminus: Glycine--tRNA ligase beta subunit (687 aa).

This sequence belongs to the class-II aminoacyl-tRNA synthetase family. Tetramer of two alpha and two beta subunits.

The protein localises to the cytoplasm. The catalysed reaction is tRNA(Gly) + glycine + ATP = glycyl-tRNA(Gly) + AMP + diphosphate. This Geotalea daltonii (strain DSM 22248 / JCM 15807 / FRC-32) (Geobacter daltonii) protein is Glycine--tRNA ligase beta subunit.